We begin with the raw amino-acid sequence, 207 residues long: Na(+)-translocating ferredoxin:NAD(+) oxidoreductase complex subunit G (207 aa).

A helical transmembrane segment spans residues glycine 18–valine 38. At threonine 185 the chain carries FMN phosphoryl threonine.

Belongs to the RnfG family. In terms of assembly, the complex is composed of six subunits: RnfA, RnfB, RnfC, RnfD, RnfE and RnfG. The cofactor is FMN.

The protein localises to the cell membrane. It catalyses the reaction 2 reduced [2Fe-2S]-[ferredoxin] + Na(+)(in) + NAD(+) + H(+) = 2 oxidized [2Fe-2S]-[ferredoxin] + Na(+)(out) + NADH. Functionally, part of a membrane-bound complex that couples electron transfer with translocation of ions across the membrane. Couples electron transfer from reduced ferredoxin to NAD(+) with electrogenic movement of Na(+) out of the cell. Involved in caffeate respiration. The chain is Na(+)-translocating ferredoxin:NAD(+) oxidoreductase complex subunit G from Acetobacterium woodii (strain ATCC 29683 / DSM 1030 / JCM 2381 / KCTC 1655 / WB1).